A 44-amino-acid polypeptide reads, in one-letter code: Large ribosomal subunit protein bL34 (44 aa).

Basic residues-rich tracts occupy residues 1-14 (MKRT…KRQK) and 31-44 (LSAR…RLAV). Residues 1-44 (MKRTLGGTTRKRQKTSGFRARMRTASGRRVLSARRRRGRHRLAV) form a disordered region.

Belongs to the bacterial ribosomal protein bL34 family.

In Gloeobacter violaceus (strain ATCC 29082 / PCC 7421), this protein is Large ribosomal subunit protein bL34.